Consider the following 145-residue polypeptide: Protein FAM216B (145 aa).

The segment at threonine 92–proline 121 is disordered.

This sequence belongs to the FAM216 family.

This is Protein FAM216B (FAM216B) from Bos taurus (Bovine).